A 482-amino-acid polypeptide reads, in one-letter code: Putative fatty acid desaturase 2-like protein FADS2B (482 aa).

The disordered stretch occupies residues 1–31; sequence MKFEEKCGDNGSIVGRNQSYPGEKHQPKGKP. The Cytoplasmic segment spans residues 1–167; it reads MKFEEKCGDN…EAMNMFHANL (167 aa). Residues 56–132 form the Cytochrome b5 heme-binding domain; sequence LSMYTWLEIQ…LKPLLIGELA (77 aa). Heme contacts are provided by His-90 and His-113. Residues 168–188 form a helical membrane-spanning segment; the sequence is GFFFLHFVQILILEVLAWLIV. At 189 to 190 the chain is on the lumenal side; that stretch reads YH. Residues 191-211 traverse the membrane as a helical segment; sequence FGSGWPVTMFISFLLTISQAS. At 212 to 305 the chain is on the cytoplasmic side; it reads SSFLQHDAGH…YEEQHLYFYK (94 aa). The short motif at 217 to 221 is the Histidine box-1 element; it reads HDAGH. Residues 254-258 carry the Histidine box-2 motif; that stretch reads HFEQH. Residues 306–326 traverse the membrane as a helical segment; the sequence is VWLPLFMPVYLKLPSMQAMYL. At 327 to 343 the chain is on the lumenal side; sequence QRYWVCFSLQDITWVSS. The helical transmembrane segment at 344-364 threads the bilayer; sequence FYIYFITFGLYYGIFGTMLLI. Residues 365–482 lie on the Cytoplasmic side of the membrane; that stretch reads YLVKFLESPW…AALWADAYYE (118 aa). The short motif at 421–425 is the Histidine box-3 element; the sequence is QIEHH.

The protein belongs to the fatty acid desaturase type 1 family.

It is found in the endoplasmic reticulum membrane. The protein operates within lipid metabolism; polyunsaturated fatty acid biosynthesis. The chain is Putative fatty acid desaturase 2-like protein FADS2B from Homo sapiens (Human).